Consider the following 436-residue polypeptide: 3-ketoacyl-CoA thiolase (436 aa).

The Acyl-thioester intermediate role is filled by Cys-99. Residues His-392 and Cys-422 each act as proton acceptor in the active site.

The protein belongs to the thiolase-like superfamily. Thiolase family. Heterotetramer of two alpha chains (FadJ) and two beta chains (FadI).

Its subcellular location is the cytoplasm. It carries out the reaction an acyl-CoA + acetyl-CoA = a 3-oxoacyl-CoA + CoA. Its pathway is lipid metabolism; fatty acid beta-oxidation. In terms of biological role, catalyzes the final step of fatty acid oxidation in which acetyl-CoA is released and the CoA ester of a fatty acid two carbons shorter is formed. In Salmonella choleraesuis (strain SC-B67), this protein is 3-ketoacyl-CoA thiolase.